A 614-amino-acid polypeptide reads, in one-letter code: Dihydroxy-acid dehydratase (614 aa).

Aspartate 81 contacts Mg(2+). Residue cysteine 122 participates in [2Fe-2S] cluster binding. Mg(2+)-binding residues include aspartate 123 and lysine 124. Lysine 124 is modified (N6-carboxylysine). Cysteine 193 lines the [2Fe-2S] cluster pocket. Residue glutamate 489 participates in Mg(2+) binding. The active-site Proton acceptor is the serine 515.

It belongs to the IlvD/Edd family. Homodimer. It depends on [2Fe-2S] cluster as a cofactor. Mg(2+) serves as cofactor.

The enzyme catalyses (2R)-2,3-dihydroxy-3-methylbutanoate = 3-methyl-2-oxobutanoate + H2O. It carries out the reaction (2R,3R)-2,3-dihydroxy-3-methylpentanoate = (S)-3-methyl-2-oxopentanoate + H2O. The protein operates within amino-acid biosynthesis; L-isoleucine biosynthesis; L-isoleucine from 2-oxobutanoate: step 3/4. It participates in amino-acid biosynthesis; L-valine biosynthesis; L-valine from pyruvate: step 3/4. Its function is as follows. Functions in the biosynthesis of branched-chain amino acids. Catalyzes the dehydration of (2R,3R)-2,3-dihydroxy-3-methylpentanoate (2,3-dihydroxy-3-methylvalerate) into 2-oxo-3-methylpentanoate (2-oxo-3-methylvalerate) and of (2R)-2,3-dihydroxy-3-methylbutanoate (2,3-dihydroxyisovalerate) into 2-oxo-3-methylbutanoate (2-oxoisovalerate), the penultimate precursor to L-isoleucine and L-valine, respectively. The sequence is that of Dihydroxy-acid dehydratase from Hahella chejuensis (strain KCTC 2396).